Here is a 217-residue protein sequence, read N- to C-terminus: Pyrophosphatase PpaX (217 aa).

D11 acts as the Nucleophile in catalysis.

This sequence belongs to the HAD-like hydrolase superfamily. PpaX family. Requires Mg(2+) as cofactor.

The enzyme catalyses diphosphate + H2O = 2 phosphate + H(+). In terms of biological role, hydrolyzes pyrophosphate formed during P-Ser-HPr dephosphorylation by HPrK/P. Might play a role in controlling the intracellular pyrophosphate pool. The sequence is that of Pyrophosphatase PpaX from Listeria monocytogenes serotype 4a (strain HCC23).